The sequence spans 456 residues: Histidine--tRNA ligase (456 aa).

The protein belongs to the class-II aminoacyl-tRNA synthetase family. As to quaternary structure, homodimer.

Its subcellular location is the cytoplasm. It catalyses the reaction tRNA(His) + L-histidine + ATP = L-histidyl-tRNA(His) + AMP + diphosphate + H(+). The polypeptide is Histidine--tRNA ligase (Cupriavidus taiwanensis (strain DSM 17343 / BCRC 17206 / CCUG 44338 / CIP 107171 / LMG 19424 / R1) (Ralstonia taiwanensis (strain LMG 19424))).